The primary structure comprises 306 residues: Aspartate carbamoyltransferase catalytic subunit (306 aa).

Carbamoyl phosphate is bound by residues Arg51 and Thr52. Position 80 (Lys80) interacts with L-aspartate. Carbamoyl phosphate-binding residues include Arg101, His129, and Gln132. L-aspartate-binding residues include Arg162 and Arg224. Positions 263 and 264 each coordinate carbamoyl phosphate.

This sequence belongs to the aspartate/ornithine carbamoyltransferase superfamily. ATCase family. As to quaternary structure, heterododecamer (2C3:3R2) of six catalytic PyrB chains organized as two trimers (C3), and six regulatory PyrI chains organized as three dimers (R2).

It catalyses the reaction carbamoyl phosphate + L-aspartate = N-carbamoyl-L-aspartate + phosphate + H(+). It functions in the pathway pyrimidine metabolism; UMP biosynthesis via de novo pathway; (S)-dihydroorotate from bicarbonate: step 2/3. In terms of biological role, catalyzes the condensation of carbamoyl phosphate and aspartate to form carbamoyl aspartate and inorganic phosphate, the committed step in the de novo pyrimidine nucleotide biosynthesis pathway. This is Aspartate carbamoyltransferase catalytic subunit from Parabacteroides distasonis (strain ATCC 8503 / DSM 20701 / CIP 104284 / JCM 5825 / NCTC 11152).